The following is a 155-amino-acid chain: DNA-binding protein inhibitor ID-1 (155 aa).

The region spanning 53–105 (LPALLDEQQVNVLLYDMNGCYSRLKELVPTLPQNRKVSKVEILQHVIDYIRDL) is the bHLH domain. The Nuclear export signal motif lies at 98–111 (VIDYIRDLQLELNS).

In terms of assembly, heterodimer with other HLH proteins. Interacts with COPS5, IFI204, GATA4 and NKX2-5. Interacts with CLOCK and BMAL1.

It localises to the cytoplasm. The protein localises to the nucleus. In terms of biological role, transcriptional regulator (lacking a basic DNA binding domain) which negatively regulates the basic helix-loop-helix (bHLH) transcription factors by forming heterodimers and inhibiting their DNA binding and transcriptional activity. Implicated in regulating a variety of cellular processes, including cellular growth, senescence, differentiation, apoptosis, angiogenesis, and neoplastic transformation. Inhibits skeletal muscle and cardiac myocyte differentiation. Regulates the circadian clock by repressing the transcriptional activator activity of the CLOCK-BMAL1 heterodimer. In Homo sapiens (Human), this protein is DNA-binding protein inhibitor ID-1 (ID1).